The primary structure comprises 280 residues: HCLS1-associated protein X-1 (280 aa).

Serine 2 carries the N-acetylserine modification. The tract at residues 2 to 45 (SVFDLFRGFFGFPGPRSHRDPFFGGMTRDDDDDDDDDDEAEEDR) is required for localization in mitochondria. Disordered stretches follow at residues 12–70 (GFPG…SFSP) and 100–263 (TLPS…SALD). Residues 30-43 (DDDDDDDDDDEAEE) show a composition bias toward acidic residues. An involved in HCLS1 binding region spans residues 115 to 280 (TPGERLREGQ…LLLGRWFRSR (166 aa)). 2 stretches are compositionally biased toward basic and acidic residues: residues 116–125 (PGERLREGQT) and 134–154 (PDSH…KPES). The involved in CASP9 binding stretch occupies residues 176–207 (VSPHSRAKEDKDLDSQVSQEGLGPLLQPQPKS). Positions 177 to 248 (SPHSRAKEDK…TTVTHQEAHD (72 aa)) are involved in GNA13 binding. Residues 184 to 280 (EDKDLDSQVS…LLLGRWFRSR (97 aa)) form a required for localization in sarcoplasmic reticulum region. An involved in PKD2 binding region spans residues 185–280 (DKDLDSQVSQ…LLLGRWFRSR (96 aa)). Serine 190 and serine 193 each carry phosphoserine. The interval 204-226 (QPKSYFKSISVTKITKPDGTVEE) is involved in PLN binding. Residues 204-246 (QPKSYFKSISVTKITKPDGTVEERRTVVDSEGRRETTVTHQEA) form an involved in ATP2A2 binding region. Residues 211-280 (SISVTKITKP…LLLGRWFRSR (70 aa)) form a mediates interaction with UCP3 region. Residues 218 to 256 (TKPDGTVEERRTVVDSEGRRETTVTHQEAHDSSRSDPDS) show a composition bias toward basic and acidic residues. Residues 271–280 (LLLGRWFRSR) are required for ITGB6 binding.

It belongs to the HAX1 family. In terms of assembly, interacts with ABCB1, ABCB4 and ABCB11. Directly associates with HCLS1/HS1, through binding to its N-terminal region. Interacts with CTTN. Interacts with PKD2. Interacts with GNA13. Interacts with CASP9. Interacts with ITGB6. Interacts with PLN and ATP2A2; these interactions are inhibited by calcium. Interacts with GRB7. Interacts (via C-terminus) with XIAP/BIRC4 (via BIR 2 domain and BIR 3 domain) and this interaction blocks ubiquitination of XIAP/BIRC4. Interacts with TPC2. Interacts with KCNC3. Interacts with XPO1. Interacts with RNF217. Interacts with UCP3; the interaction is direct and calcium-dependent. Interacts with MAPRE2; this interaction regulates cell migration in keratinocytes. Ubiquitous, with highest levels in kidney and liver (at protein level).

It localises to the mitochondrion matrix. Its subcellular location is the endoplasmic reticulum. The protein localises to the nucleus membrane. The protein resides in the cytoplasmic vesicle. It is found in the cytoplasm. It localises to the cell cortex. Its subcellular location is the cell membrane. The protein localises to the sarcoplasmic reticulum. The protein resides in the P-body. It is found in the nucleus. Its function is as follows. Recruits the Arp2/3 complex to the cell cortex and regulates reorganization of the cortical actin cytoskeleton via its interaction with KCNC3 and the Arp2/3 complex. Slows down the rate of inactivation of KCNC3 channels. Promotes GNA13-mediated cell migration. Involved in the clathrin-mediated endocytosis pathway. May be involved in internalization of ABC transporters such as ABCB11. May inhibit CASP9 and CASP3. Promotes cell survival. May regulate intracellular calcium pools. In Mus musculus (Mouse), this protein is HCLS1-associated protein X-1 (Hax1).